The sequence spans 617 residues: Protein AsmA (617 aa).

Residues Met-1–Arg-3 lie on the Cytoplasmic side of the membrane. A helical membrane pass occupies residues Phe-4–Leu-24. Over Leu-25 to Met-617 the chain is Periplasmic. Residues Thr-302–Leu-319 are compositionally biased toward polar residues. Positions Thr-302–Arg-321 are disordered.

This sequence belongs to the AsmA family.

It localises to the cell inner membrane. Functionally, could be involved in the assembly of outer membrane proteins. May indirectly influence the assembly of outer membrane proteins, potentially by altering outer membrane fluidity. Inhibits the assembly of mutant forms of outer membrane protein F (OmpF). The protein is Protein AsmA of Escherichia coli (strain K12).